The primary structure comprises 558 residues: SPATS2-like protein (558 aa).

Residue Ala-2 is modified to N-acetylalanine. The segment covering 63 to 79 has biased composition (basic residues); that stretch reads GKKKNNKRKRSKSKQHQ. A disordered region spans residues 63–204; the sequence is GKKKNNKRKR…SPVKSNAPAA (142 aa). Composition is skewed to basic and acidic residues over residues 80–92 and 110–142; these read GNKD…ERPE and GCEK…EPPR. Ser-120 carries the post-translational modification Phosphoserine. A coiled-coil region spans residues 279–344; that stretch reads KEEAMDILTA…ARFSCDIEQL (66 aa). Disordered regions lie at residues 385–406 and 421–514; these read GNFA…ANPK and TMPT…RQHA. The segment covering 421 to 433 has biased composition (polar residues); it reads TMPTNKQQNGPSS. Over residues 469-485 the composition is skewed to basic residues; sequence HEHRRQPHNGFRPKNKG.

Belongs to the SPATS2 family.

The protein localises to the cytoplasm. The protein resides in the nucleus. It is found in the nucleolus. This is SPATS2-like protein (Spats2l) from Mus musculus (Mouse).